The sequence spans 460 residues: Diguanylate cyclase DosC (460 aa).

Heme is bound at residue histidine 98. Positions 325 to 458 (TPLSVLIIDV…GRNRVELWKA (134 aa)) constitute a GGDEF domain. Aspartate 333 contacts Mg(2+). Residues asparagine 341 and aspartate 350 each coordinate substrate. Position 376 (aspartate 376) interacts with Mg(2+). The active-site Proton acceptor is aspartate 376.

The cofactor is heme. It depends on Mg(2+) as a cofactor.

It catalyses the reaction 2 GTP = 3',3'-c-di-GMP + 2 diphosphate. The protein operates within purine metabolism; 3',5'-cyclic di-GMP biosynthesis. Its function is as follows. Globin-coupled heme-based oxygen sensor protein displaying diguanylate cyclase (DGC) activity in response to oxygen availability. Thus, catalyzes the synthesis of cyclic diguanylate (c-di-GMP) via the condensation of 2 GTP molecules. Cyclic-di-GMP is a second messenger which controls cell surface-associated traits in bacteria. The sequence is that of Diguanylate cyclase DosC (dosC) from Escherichia coli O157:H7.